The primary structure comprises 445 residues: MTTILPNLPTGQKVGIAFSGGLDTSAALLWMRQKGAVPYAYTANLGQPDEPDYDEIPRRAMQYGAEAARLVDCRAQLVAEGIAALQAGAFHISTAGLTYFNTTPIGRAVTGTMLVAAMKEDGVNIWGDGSTFKGNDIERFYRYGLLTNPDLKIYKPWLDQTFIDELGGRAEMSEYMRQAGFDYKMSAEKAYSTDSNMLGATHEAKDLELLNSGIRIVQPIMGVAFWQDSVQIKAEEVTVRFEEGQPVALNGVEYADPVELLLEANRIGGRHGLGMSDQIENRIIEAKSRGIYEAPGLALLFIAYERLVTGIHNEDTIEQYRENGRKLGRLLYQGRWFDPQAIMLRETAQRWVARAITGEVTLELRRGNDYSLLNTESANLTYAPERLSMEKVENAPFTPADRIGQLTMRNLDIVDTREKLFTYVKTGLLAPSAGSALPQIKDGKK.

ATP is bound by residues 17–25 (AFSGGLDTS) and alanine 43. Tyrosine 99 contacts L-citrulline. 2 residues coordinate ATP: glycine 129 and threonine 131. Residues threonine 131, asparagine 135, and aspartate 136 each contribute to the L-aspartate site. Asparagine 135 is an L-citrulline binding site. ATP is bound at residue aspartate 136. L-citrulline is bound by residues arginine 139 and serine 192. Aspartate 194 contacts ATP. Threonine 201, glutamate 203, and glutamate 280 together coordinate L-citrulline.

The protein belongs to the argininosuccinate synthase family. Type 2 subfamily. Homotetramer.

It is found in the cytoplasm. It catalyses the reaction L-citrulline + L-aspartate + ATP = 2-(N(omega)-L-arginino)succinate + AMP + diphosphate + H(+). It participates in amino-acid biosynthesis; L-arginine biosynthesis; L-arginine from L-ornithine and carbamoyl phosphate: step 2/3. This Bordetella bronchiseptica (strain ATCC BAA-588 / NCTC 13252 / RB50) (Alcaligenes bronchisepticus) protein is Argininosuccinate synthase.